The following is a 205-amino-acid chain: Thymidylate kinase (205 aa).

An ATP-binding site is contributed by 11–18 (GVEGAGKS).

Belongs to the thymidylate kinase family.

It catalyses the reaction dTMP + ATP = dTDP + ADP. In terms of biological role, phosphorylation of dTMP to form dTDP in both de novo and salvage pathways of dTTP synthesis. The polypeptide is Thymidylate kinase (Vesicomyosocius okutanii subsp. Calyptogena okutanii (strain HA)).